Here is a 72-residue protein sequence, read N- to C-terminus: DNA-directed RNA polymerase subunit omega (72 aa).

Belongs to the RNA polymerase subunit omega family. In terms of assembly, the RNAP catalytic core consists of 2 alpha, 1 beta, 1 beta' and 1 omega subunit. When a sigma factor is associated with the core the holoenzyme is formed, which can initiate transcription.

The catalysed reaction is RNA(n) + a ribonucleoside 5'-triphosphate = RNA(n+1) + diphosphate. Promotes RNA polymerase assembly. Latches the N- and C-terminal regions of the beta' subunit thereby facilitating its interaction with the beta and alpha subunits. In Clostridium botulinum (strain Loch Maree / Type A3), this protein is DNA-directed RNA polymerase subunit omega.